Reading from the N-terminus, the 182-residue chain is Small ribosomal subunit protein uS5 (182 aa).

The S5 DRBM domain occupies 16 to 79 (FVDRLVHINR…ESAKRGMIYV (64 aa)).

The protein belongs to the universal ribosomal protein uS5 family. As to quaternary structure, part of the 30S ribosomal subunit. Contacts proteins S4 and S8.

Its function is as follows. With S4 and S12 plays an important role in translational accuracy. Functionally, located at the back of the 30S subunit body where it stabilizes the conformation of the head with respect to the body. This is Small ribosomal subunit protein uS5 from Bartonella tribocorum (strain CIP 105476 / IBS 506).